Consider the following 434-residue polypeptide: Ribosomal RNA-processing protein 14 (434 aa).

Serine 2 carries the post-translational modification N-acetylserine. Basic and acidic residues-rich tracts occupy residues 32-58, 70-79, and 95-105; these read KSQE…LDPE, VMKKKEKDAK, and KQKEATSKVEG. A disordered region spans residues 32 to 257; sequence KSQEQWKAKK…RFKKGKKDSE (226 aa). Positions 121 to 140 are enriched in acidic residues; it reads PDEDEEEEEDIKVIFDDEGN. The span at 144-178 shows a compositional bias: basic and acidic residues; sequence LESKKDTTEPDRSVEKKSITEEEKLQRKKNLEALR. Coiled-coil stretches lie at residues 162–230 and 293–360; these read ITEE…EIAS and AKND…QKRK. Residues 220 to 241 show a composition bias toward acidic residues; that stretch reads EQEQDQDEIASDSDMEDIDSDL. Positions 375-392 are enriched in basic and acidic residues; sequence TISERQKRREENLRIRKD. The segment at 375-434 is disordered; it reads TISERQKRREENLRIRKDNKGKKRNKQEKMKRKYVGSAVPKKRAGFEGRLKTGKKKGGPK. 2 stretches are compositionally biased toward basic residues: residues 393-408 and 425-434; these read NKGK…KRKY and KTGKKKGGPK.

The protein belongs to the SURF6 family. In terms of assembly, component of the 90S and 60S pre-ribosomal particles.

The protein resides in the nucleus. It is found in the nucleolus. Involved in ribosome biogenesis and cell polarity. Required for the synthesis of both 40S and 60S ribosomal subunits and may also play some direct role in correct positioning of the mitotic spindle during mitosis. This Saccharomyces cerevisiae (strain ATCC 204508 / S288c) (Baker's yeast) protein is Ribosomal RNA-processing protein 14 (RRP14).